The sequence spans 312 residues: MDKEWLEVCIYTSSEALEAISGILYNTGVKGVSIEDPKDIEFKKKHPGDWDYFDETLLKVKDTAIVKGYYKEDDKFNEYLDYIKKSVSNLDQFGIDKGEGLVEVHKVNEEDWENNWKKYYKPTKVSNKIVIKPIWENYDKKQEEIIVELDPGMAFGTGTHETTRMCINALEKYIKEDRTVFDIGCGSGILSIAAAKLGAKHVIGVDLDPVAVKSSKENIKYNNLDNIEILEGNLMEVVEGRANIVVANIIADVIIFLTEGVKAFIEKGGYFIASGIINSRKEDVIKKLEETGFVIEEVREEGEWVCIISKIN.

Positions 163, 184, 206, and 248 each coordinate S-adenosyl-L-methionine.

The protein belongs to the methyltransferase superfamily. PrmA family.

The protein resides in the cytoplasm. The catalysed reaction is L-lysyl-[protein] + 3 S-adenosyl-L-methionine = N(6),N(6),N(6)-trimethyl-L-lysyl-[protein] + 3 S-adenosyl-L-homocysteine + 3 H(+). In terms of biological role, methylates ribosomal protein L11. This Clostridium botulinum (strain Loch Maree / Type A3) protein is Ribosomal protein L11 methyltransferase.